The primary structure comprises 631 residues: MSTTTLTRREQRAKAQHFIDTLEGTAFPNSKRIYVTGSQHDIRVPMREIQLSPTLIGGSKDNQQFEENEAVPVYDTSGPYGDPEVAINVQQGLAKLRQPWIDARNDSEELDDRSSAYTRERLADDGLDDLRFTGLLTPKRAKAGKRITQLHYARQGIVTPEMEFIAIRENMGRERICSEVLRHQHPGMSFGARLPENITPEFVRDEVAAGRAIIPANINHPESEPMIIGRNFPVKVNANIGNSAVTSSIEEEVEKLVWSTRWGADTVMDLSTGRYIHETREWILRNSPVPIGTVPIYQALEKVNGIAEDLTWEAFRDTLLEQAEQGVDYFTIHAGVLLRYVPMTAKRLTGIVSRGGSIMAKWCLSHHKENFLFEHFREICEICAAYDVSLSLGDGLRPGSIQDANDEAQFSELHTLGELTKIAWEYDVQVMIEGPGHVPMHMIQRNMTEELESCHEAPFYTLGPLTTDIAPGYDHFTSGIGAAMIGWFGCAMLCYVTPKEHLGLPNKEDVKQGLITYKIAAHAADLAKGHPGAQIRDNAMSKARFEFRWEDQFNLALDPFTARAYHDETLPQESGKVAHFCSMCGPKFCSMKISQEVRDYAAAQAIEVGMADMSESFRAKGGEIYLKREEA.

Substrate-binding positions include N239, M268, Y297, H333, 353-355 (SRG), 394-397 (DGLR), and E433. H437 contacts Zn(2+). Y460 contributes to the substrate binding site. H501 contacts Zn(2+). [4Fe-4S] cluster-binding residues include C581, C584, and C589.

It belongs to the ThiC family. Homodimer. The cofactor is [4Fe-4S] cluster.

The catalysed reaction is 5-amino-1-(5-phospho-beta-D-ribosyl)imidazole + S-adenosyl-L-methionine = 4-amino-2-methyl-5-(phosphooxymethyl)pyrimidine + CO + 5'-deoxyadenosine + formate + L-methionine + 3 H(+). Its pathway is cofactor biosynthesis; thiamine diphosphate biosynthesis. In terms of biological role, catalyzes the synthesis of the hydroxymethylpyrimidine phosphate (HMP-P) moiety of thiamine from aminoimidazole ribotide (AIR) in a radical S-adenosyl-L-methionine (SAM)-dependent reaction. This Salmonella gallinarum (strain 287/91 / NCTC 13346) protein is Phosphomethylpyrimidine synthase.